Here is a 128-residue protein sequence, read N- to C-terminus: T-cell leukemia/lymphoma protein 1B (128 aa).

This sequence belongs to the TCL1 family. Interacts with AKT1 and AKT2 (via PH domain). Does not interact with AKT3. As to expression, expressed in a variety of tissues including placenta and testis.

Functionally, enhances the phosphorylation and activation of AKT1 and AKT2. The sequence is that of T-cell leukemia/lymphoma protein 1B (TCL1B) from Homo sapiens (Human).